We begin with the raw amino-acid sequence, 457 residues long: MDRISNLPDEIICHIGSFLSAREAAFTTVLSKRWHNLFTIVPDLHFDSSVKDGESLTDFVDRVMALPASSRVNKLSLKWWFDEDTDSAQFDEDTEPEDTEPAQFDQINRSLRVVLKRGVADFYLWVHGKQGYTLPFEVFTCETVTKLSLGSGFAIDFLPENALLPALKTLSLYHVRFYEFGRCAFKTLLASSPVLEELTVCGVNWELWKWSRTVSSSSLKRLTIMRKQWDAFDDSDFKSISFDTPSLAYLYYSDYVPKEYLSVNLDSLVETKLYLCPEENYMWGKGDEKRFNPINLLHGLKNVETLNLYTIMTAEMFYVFREALPVFQKLSHLSVNLSNFCWSSMPMLIKKAPNLKTLNIDGPLHYESYYRCAGDIFCECVSEYSFLVSCPLEVLKITEYYGSFRELMQMKHFLEKLSCLELVEVHSQATGERKLKLIADLERLPRASSKCKFEVVS.

Positions M1–S49 constitute an F-box domain. LRR repeat units follow at residues G53–W79, L147–H174, F177–G202, W229–D254, W283–T310, and L337–G362.

The polypeptide is F-box/LRR-repeat protein At3g62440 (Arabidopsis thaliana (Mouse-ear cress)).